The primary structure comprises 211 residues: Mitotic spindle assembly checkpoint protein MAD2B (211 aa).

Residues 13-203 form the HORMA domain; that stretch reads QVVADVLSEF…SDILKMQLYV (191 aa).

As to quaternary structure, homooligomer. Interacts with REV1. Interacts with FZR1 (in complex with the anaphase promoting complex APC). May interact with CDC20. Heterodimer with REV3L. This dimer forms the minimal DNA polymerase zeta complex (Pol-zeta2), with REV3L bearing DNA polymerase catalytic activity, although its activity is very low in this context. Component of the tetrameric Pol-zeta complex (Pol-zeta4), which consists of REV3L, MAD2L2, POLD2 and POLD3; Pol-zeta4 is the fully active form of DNA polymerase zeta. Component of the shieldin complex, consisting of SHLD1, SHLD2, SHLD3 and MAD2L2/REV7. Within the complex, SHLD2 forms a scaffold which interacts with a SHLD3-MAD2L2 subcomplex via its N-terminus, and with SHLD1 via its C-terminus.

It is found in the nucleus. The protein localises to the cytoplasm. It localises to the cytoskeleton. Its subcellular location is the spindle. The protein resides in the chromosome. In terms of biological role, adapter protein able to interact with different proteins and involved in different biological processes. Mediates the interaction between the error-prone DNA polymerase zeta catalytic subunit REV3L and the inserter polymerase REV1, thereby mediating the second polymerase switching in translesion DNA synthesis. Translesion DNA synthesis releases the replication blockade of replicative polymerases, stalled in presence of DNA lesions. May also play a role in signal transduction in response to DNA damage. May regulate the activation of the anaphase promoting complex APC thereby regulating progression through the cell cycle. Component of the shieldin complex, which plays an important role in repair of DNA double-stranded breaks (DSBs). During G1 and S phase of the cell cycle, the complex functions downstream of TP53BP1 to promote non-homologous end joining (NHEJ) and suppress DNA end resection. Through transcriptional regulation may play a role in epithelial-mesenchymal transdifferentiation. The chain is Mitotic spindle assembly checkpoint protein MAD2B (MAD2L2) from Gallus gallus (Chicken).